The sequence spans 905 residues: Protein translocase subunit SecA (905 aa).

Residues Gln-87, 105–109 (GEGKT), and Asp-509 contribute to the ATP site. Positions 890, 892, 901, and 902 each coordinate Zn(2+).

It belongs to the SecA family. In terms of assembly, monomer and homodimer. Part of the essential Sec protein translocation apparatus which comprises SecA, SecYEG and auxiliary proteins SecDF-YajC and YidC. Zn(2+) is required as a cofactor.

The protein resides in the cell inner membrane. Its subcellular location is the cytoplasm. The catalysed reaction is ATP + H2O + cellular proteinSide 1 = ADP + phosphate + cellular proteinSide 2.. Its function is as follows. Part of the Sec protein translocase complex. Interacts with the SecYEG preprotein conducting channel. Has a central role in coupling the hydrolysis of ATP to the transfer of proteins into and across the cell membrane, serving both as a receptor for the preprotein-SecB complex and as an ATP-driven molecular motor driving the stepwise translocation of polypeptide chains across the membrane. This chain is Protein translocase subunit SecA, found in Acinetobacter baylyi (strain ATCC 33305 / BD413 / ADP1).